The primary structure comprises 150 residues: Transcription antitermination protein NusB (150 aa).

This sequence belongs to the NusB family.

Its function is as follows. Involved in transcription antitermination. Required for transcription of ribosomal RNA (rRNA) genes. Binds specifically to the boxA antiterminator sequence of the ribosomal RNA (rrn) operons. The protein is Transcription antitermination protein NusB of Streptococcus pyogenes serotype M2 (strain MGAS10270).